Reading from the N-terminus, the 602-residue chain is MHTERQKHIRNFSIVAHIDHGKSTLADRLIEKTGTLTEREMNSQVLDNMELEKERGITIKSQAIRLIYKRKDGGEYVLNLIDTPGHVDFNYEVSRSLAACEGAILVVDATQGIQAQTLANCYLAMEHDLEILPVINKIDLPSARAEEVKEEIEDIIGIEASEAPLVSAKTGLNIEQVLEAIVDKIPSPQGDENAPLKALIFDSNYDSYKGVVCHIRVKEGNIKPGDEIKLMATGKIYEVTETGIFVPNFMPRAELRAGDVGYFTASIKNVRDARVGDTVTGAKNQAKEPLKGYRPVISMVYSGIYPVDGAKYGELKEALEKLQVNDAALNFEPETSVALGFGFRCGFLGLLHMDVIQERVEREFNLDIITTAPSVIYKIGKTDGTVVELTNPTNMPPVSEIKYMEEPIVKASIITPSEYVGAVMELAQNRRGVFRDMQYIETTRVSLNYDIPLNEIIYNFFDVLKSRTRGYASLDYELKGYKSAKLVRLDVLLNGDMVDALSMIVPEERAYDRGRGIAEKLKGIIPRQLFEIPIQAAVGGKVIARETVKAMRKDVLAKCYGGDISRKRKLLEKQKEGKKRMRQVGTVEIPQEAFMAILKTEE.

One can recognise a tr-type G domain in the interval 7–189 (KHIRNFSIVA…AIVDKIPSPQ (183 aa)). Residues 19-24 (DHGKST) and 136-139 (NKID) each bind GTP.

It belongs to the TRAFAC class translation factor GTPase superfamily. Classic translation factor GTPase family. LepA subfamily.

The protein localises to the cell membrane. The enzyme catalyses GTP + H2O = GDP + phosphate + H(+). Required for accurate and efficient protein synthesis under certain stress conditions. May act as a fidelity factor of the translation reaction, by catalyzing a one-codon backward translocation of tRNAs on improperly translocated ribosomes. Back-translocation proceeds from a post-translocation (POST) complex to a pre-translocation (PRE) complex, thus giving elongation factor G a second chance to translocate the tRNAs correctly. Binds to ribosomes in a GTP-dependent manner. This is Elongation factor 4 from Clostridium kluyveri (strain ATCC 8527 / DSM 555 / NBRC 12016 / NCIMB 10680 / K1).